The primary structure comprises 212 residues: ER lumen protein-retaining receptor 1 (212 aa).

Over 1-4 (MNIF) the chain is Lumenal. Residues 5 to 24 (RFLGDISHLSAILILLLKIW) form a helical membrane-spanning segment. Topologically, residues 25–32 (KSRSCAGI) are cytoplasmic. Residues 33–52 (SGKSQLLFAIVFTTRYLDLF) form a helical membrane-spanning segment. An interaction with the K-D-E-L motif on target proteins region spans residues 47-48 (RY). Residues 53 to 58 (TNFISL) lie on the Lumenal side of the membrane. Residues 59 to 79 (YNTSMKMVYVASSYATIWMIY) traverse the membrane as a helical segment. Residues 80–92 (SKFKATYDGNHDT) lie on the Cytoplasmic side of the membrane. The helical transmembrane segment at 93 to 110 (FRVEFLIVPTAILAFLVN) threads the bilayer. Over 111–116 (HDFTPL) the chain is Lumenal. The chain crosses the membrane as a helical span at residues 117 to 135 (EILWTFSIYLESVAILPQL). The Cytoplasmic portion of the chain corresponds to 136–149 (FMVSKTGEAETITS). Residues 150-168 (HYLFALGIYRALYLFNWIW) form a helical membrane-spanning segment. Residues 159-169 (RALYLFNWIWR) are interaction with the K-D-E-L motif on target proteins. The Lumenal portion of the chain corresponds to 169–178 (RYQFEGFFDL). The chain crosses the membrane as a helical span at residues 179-199 (IAIVAGLVQTVLYCDFFYLYI). Residues 200–212 (TKVLKGKKLSLPA) are Cytoplasmic-facing. The tract at residues 204 to 207 (KGKK) is important for recycling of cargo proteins with the sequence motif K-D-E-L from the Golgi to the endoplasmic reticulum.

This sequence belongs to the ERD2 family.

It is found in the golgi apparatus membrane. The protein resides in the cytoplasmic vesicle. The protein localises to the COPI-coated vesicle membrane. It localises to the endoplasmic reticulum membrane. Its subcellular location is the endoplasmic reticulum-Golgi intermediate compartment membrane. Receptor for the C-terminal sequence motif K-D-E-L that is present on endoplasmic reticulum resident proteins and that mediates their recycling from the Golgi back to the endoplasmic reticulum. This Xenopus tropicalis (Western clawed frog) protein is ER lumen protein-retaining receptor 1 (kdelr1).